The primary structure comprises 292 residues: Small ribosomal subunit protein uS5 (292 aa).

The disordered stretch occupies residues 1–56 (MADDAGAAGGPGGPGGPGMGGRGGFRGGFGSGIRGRGRGRGRGRGRGRGARGGKAE). At alanine 2 the chain carries N-acetylalanine. Gly residues predominate over residues 7–34 (AAGGPGGPGGPGMGGRGGFRGGFGSGIR). Positions 35-51 (GRGRGRGRGRGRGRGAR) are enriched in basic residues. Glycyl lysine isopeptide (Lys-Gly) (interchain with G-Cter in ubiquitin) cross-links involve residues lysine 54 and lysine 58. Residues 102–165 (LKDEVLKIMP…ILAKLSIVPV (64 aa)) form the S5 DRBM domain. Position 251 is a phosphothreonine (threonine 251). Lysine 262 carries the post-translational modification N6-acetyllysine. Serine 263 bears the Phosphoserine mark. At threonine 269 the chain carries Phosphothreonine. The residue at position 274 (lysine 274) is an N6-acetyllysine; alternate. Lysine 274 is covalently cross-linked (Glycyl lysine isopeptide (Lys-Gly) (interchain with G-Cter in SUMO1); alternate). Residue lysine 274 forms a Glycyl lysine isopeptide (Lys-Gly) (interchain with G-Cter in SUMO2); alternate linkage. Residue lysine 274 forms a Glycyl lysine isopeptide (Lys-Gly) (interchain with G-Cter in ubiquitin); alternate linkage. Serine 280 carries the phosphoserine modification.

This sequence belongs to the universal ribosomal protein uS5 family. As to quaternary structure, component of the small ribosomal subunit. Interacts with zinc finger protein ZNF277 (via zinc-finger domains); the interaction is direct; the interaction is extra-ribosomal. Interaction with ZNF277 competes with the binding of RPS2 to protein arginine methyltransferase PRMT3. Citrullinated by PADI4 in the Arg/Gly-rich region. In terms of processing, asymmetric arginine dimethylation by PRMT3 occurs at multiple sites in the Arg/Gly-rich region. Post-translationally, monoubiquitinated at Lys-54 and Lys-58 by RNF10 when a ribosome has stalled during translation, leading to its degradation by the proteasome. Deubiquitinated at Lys-54 and Lys-58 by USP10, preventing degradation by the proteasome and promoting 40S ribosome subunit recycling following ribosome dissociation.

The protein localises to the cytoplasm. Its subcellular location is the nucleus. It localises to the nucleolus. Functionally, component of the ribosome, a large ribonucleoprotein complex responsible for the synthesis of proteins in the cell. The small ribosomal subunit (SSU) binds messenger RNAs (mRNAs) and translates the encoded message by selecting cognate aminoacyl-transfer RNA (tRNA) molecules. The large subunit (LSU) contains the ribosomal catalytic site termed the peptidyl transferase center (PTC), which catalyzes the formation of peptide bonds, thereby polymerizing the amino acids delivered by tRNAs into a polypeptide chain. The nascent polypeptides leave the ribosome through a tunnel in the LSU and interact with protein factors that function in enzymatic processing, targeting, and the membrane insertion of nascent chains at the exit of the ribosomal tunnel. Plays a role in the assembly and function of the 40S ribosomal subunit. This chain is Small ribosomal subunit protein uS5 (RPS2), found in Oryctolagus cuniculus (Rabbit).